A 182-amino-acid polypeptide reads, in one-letter code: Probable RNA 2'-phosphotransferase (182 aa).

It belongs to the KptA/TPT1 family.

Its function is as follows. Removes the 2'-phosphate from RNA via an intermediate in which the phosphate is ADP-ribosylated by NAD followed by a presumed transesterification to release the RNA and generate ADP-ribose 1''-2''-cyclic phosphate (APPR&gt;P). May function as an ADP-ribosylase. This chain is Probable RNA 2'-phosphotransferase, found in Trichormus variabilis (strain ATCC 29413 / PCC 7937) (Anabaena variabilis).